Consider the following 1342-residue polypeptide: DNA-directed RNA polymerase subunit beta (1342 aa).

Belongs to the RNA polymerase beta chain family. As to quaternary structure, the RNAP catalytic core consists of 2 alpha, 1 beta, 1 beta' and 1 omega subunit. When a sigma factor is associated with the core the holoenzyme is formed, which can initiate transcription.

The catalysed reaction is RNA(n) + a ribonucleoside 5'-triphosphate = RNA(n+1) + diphosphate. Its function is as follows. DNA-dependent RNA polymerase catalyzes the transcription of DNA into RNA using the four ribonucleoside triphosphates as substrates. The polypeptide is DNA-directed RNA polymerase subunit beta (Aliivibrio fischeri (strain ATCC 700601 / ES114) (Vibrio fischeri)).